A 1370-amino-acid chain; its full sequence is MPTALTHEYRVRKNFGKIHKIIDIPNLIQMQKESYELFLQRDVPSEARSERGLQEVFKSVFPIEDFSGTASLEFVQYSFGEVKYEVEECLARGMTYEAPVKIVVRLVVYDVDKEAGTRSIRDIKEQEIYFGTLPLMTDNGTFIINGTERVIVSQLHRSPGIFFDHDRGKTHSSGKILYSARIIPLRGSWLDLEFDPKDILYIRIDRRRKFPVTVLLKALGYATEELLNYFYPSEKIFLKSEAQSEKELNPDILMGSRAPEDILHPQTGEVLIKKNRKLGKQALRRLQEVGINRLPMKSTELIGQVLAQDVIDYGTGEIVAECNDSIDADMLKEFVERGVGEIELLHLEGQDVSPSFRNTLLMDKVNTQEDALIEIYRRLRPSNPPTLEVATEFFNNLFFNPDHYDLSEVGRLKLNLQLGLEVPLDYRTLRKDDILMAVRQLIRLKDSQGPVDDIDNLGNRRVRAVGELLENQYRIGLVRMERAIKERMTLQEVEALMPHDLINAKPVSAVVKEFFGTSQLSQFMDQTNPLSEITHKRRLSALGPGGLTRERAGFEVRDVHPTHYGRICPIETPEGPNIGLIVSLSTYARVNPYGFIETPYRKVDGSSARKDVSYLTAMDEKEYPIAQANAPLDEKGRFLLDLVSARVAGEPVMVPPNEIRYMDVSPNQLVSVSASLIPFLEHDDANRALMGSNMQRQAVPLIQTRAPLVGTGIERIVAKDSGVAIVARRTGVVEYVDATRIVIRAIEDNGEMGSGVDIYKLIKFQRSNQNTCINQKPLVQHGDLVTKGQIIADGPSTDHGELALGRNVMVAFMSWGGYNFEDSILVSERIGKEDVFTSIHIEEFEVVARDTKLGKEDITRDIPNVGEEALKNLDESGIIRVGAYIKPNDILVGKVTPKGESQLTPEEKLLRAIFGEKASDVKDTSLRVPPGVEGIIIDAKVFSRKGVEKDERTKTIEDQEISRLMKDQRDELEIIFKSTVKRLAKLLENQVSDSAIKDGKKVYIKKGEVFTEEILLNLPSGHWDQLTVAKDPTVSMEIENILANYREQVQLVKSLFEEKIGKLKRGDELPPGVIKMVKVYVAVKRKLQVGDKMAGRHGNKGVVSRILPAEDMPYFPDGTPVDIVLNPLGVPSRMNVGQVLETHIGWAAKGIGMQLAQMLEECRERETMNEKLQRIYNKLEFGTYFKDASERELRGLIPDFKEGIHVASPVFDGAEEAEIRAFLSEAGVSETGQSVLYDGRTGMPFDQPVTVGVMYMLKLHHLVDDKIHARSIGPYSLVTQQPLGGKAQFGGQRLGEMEVWTMEAYGAAYALQEFLTVKSDDVAGRTRMYEKIVKGDNTLEAGLPESFNVLVKELQALALDVRLLEEEEGN.

The protein belongs to the RNA polymerase beta chain family. As to quaternary structure, the RNAP catalytic core consists of 2 alpha, 1 beta, 1 beta' and 1 omega subunit. When a sigma factor is associated with the core the holoenzyme is formed, which can initiate transcription.

It carries out the reaction RNA(n) + a ribonucleoside 5'-triphosphate = RNA(n+1) + diphosphate. DNA-dependent RNA polymerase catalyzes the transcription of DNA into RNA using the four ribonucleoside triphosphates as substrates. This is DNA-directed RNA polymerase subunit beta from Syntrophobacter fumaroxidans (strain DSM 10017 / MPOB).